A 221-amino-acid chain; its full sequence is Octanoyltransferase (221 aa).

The BPL/LPL catalytic domain occupies 31–216 (GQIGDTLLLL…SLCAIFDLRP (186 aa)). Substrate contacts are provided by residues 76-83 (RGGEVTYH), 145-147 (AIG), and 159-161 (GLA). Cys-177 serves as the catalytic Acyl-thioester intermediate.

This sequence belongs to the LipB family.

Its subcellular location is the cytoplasm. The enzyme catalyses octanoyl-[ACP] + L-lysyl-[protein] = N(6)-octanoyl-L-lysyl-[protein] + holo-[ACP] + H(+). It participates in protein modification; protein lipoylation via endogenous pathway; protein N(6)-(lipoyl)lysine from octanoyl-[acyl-carrier-protein]: step 1/2. Catalyzes the transfer of endogenously produced octanoic acid from octanoyl-acyl-carrier-protein onto the lipoyl domains of lipoate-dependent enzymes. Lipoyl-ACP can also act as a substrate although octanoyl-ACP is likely to be the physiological substrate. The sequence is that of Octanoyltransferase from Chloroflexus aggregans (strain MD-66 / DSM 9485).